Consider the following 83-residue polypeptide: Male-specific opa-containing protein (83 aa).

Positions 1–18 (MNFIQIAVLFVLVAVALA) are cleaved as a signal peptide. A disordered region spans residues 23 to 83 (DPANLPAPEA…NVNHNVITIG (61 aa)). A compositionally biased stretch (low complexity) spans 28–49 (PAPEAAAAPPAAAAAPPAAAAA). A compositionally biased stretch (pro residues) spans 50 to 59 (PPAPPAPPAA).

As to expression, adult male abdomen.

Its function is as follows. May be a male specific regulatory factor. This chain is Male-specific opa-containing protein (msopa), found in Drosophila melanogaster (Fruit fly).